The primary structure comprises 973 residues: Mediator of RNA polymerase II transcription subunit 16 (973 aa).

The protein belongs to the Mediator complex subunit 16 family. In terms of assembly, component of the Mediator complex.

The protein localises to the nucleus. Component of the Mediator complex, a coactivator involved in the regulated transcription of nearly all RNA polymerase II-dependent genes. Mediator functions as a bridge to convey information from gene-specific regulatory proteins to the basal RNA polymerase II transcription machinery. Mediator is recruited to promoters by direct interactions with regulatory proteins and serves as a scaffold for the assembly of a functional preinitiation complex with RNA polymerase II and the general transcription factors. In Candida glabrata (strain ATCC 2001 / BCRC 20586 / JCM 3761 / NBRC 0622 / NRRL Y-65 / CBS 138) (Yeast), this protein is Mediator of RNA polymerase II transcription subunit 16 (SIN4).